Reading from the N-terminus, the 240-residue chain is Proline-rich antigen homolog (240 aa).

Pro residues-rich tracts occupy residues 1–31 (MTEQ…PAAP) and 38–78 (APPP…PPGP). The interval 1–78 (MTEQPPPGGS…GGYAPPPPGP (78 aa)) is disordered. In terms of domain architecture, RDD spans 89–233 (TPWITRVLAA…KRQTLADKIM (145 aa)). 3 helical membrane-spanning segments follow: residues 98–118 (AFID…IMLV), 142–162 (SMIG…YLVW), and 203–223 (LAHF…LWDA).

It belongs to the mycobacterial Pra family.

It localises to the cell membrane. In Mycobacterium tuberculosis (strain CDC 1551 / Oshkosh), this protein is Proline-rich antigen homolog.